An 877-amino-acid polypeptide reads, in one-letter code: Dystroglycan 1 (877 aa).

Residues 1 to 29 form the signal peptide; that stretch reads MRMSAGLSLLIPLWGRTFLLLLSVAVTQS. Positions 30–408 are required for laminin recognition; sequence RWPSEPSDAV…GHIRPTMTIP (379 aa). The O-glycosylated at one site stretch occupies residues 49 to 71; sequence SMHSVLSDLHEAVPTVVGIPDGT. Asparagine 141 carries an N-linked (GlcNAc...) asparagine glycan. The cysteines at positions 182 and 264 are disulfide-linked. Residues 316 to 468 are mucin-like domain; the sequence is ATPTPVTAIG…PPTRIRTTTS (153 aa). O-linked (Man6P...) threonine glycans are attached at residues threonine 317, threonine 319, and threonine 379. Disordered regions lie at residues 380–444 and 458–480; these read PTLG…PVPR and SPPT…QRPE. Residues 413–433 are compositionally biased toward low complexity; sequence PTAVATPPTPTTKNPRVSXPT. The segment at 446–468 is O-glycosylated at seven sites with GalNAc; it reads TTKAPITRLETASPPTRIRTTTS. One can recognise a Peptidase S72 domain in the interval 585–694; the sequence is RAPARFTAKF…MSIAVTGSGS (110 aa). N-linked (GlcNAc...) asparagine glycans are attached at residues asparagine 623, asparagine 631, and asparagine 643. An intrachain disulfide couples cysteine 651 to cysteine 695. A compositionally biased stretch (pro residues) spans 706–717; the sequence is PKRVPSEAPPTE. The interval 706–727 is disordered; that stretch reads PKRVPSEAPPTEVPDRDPEKSS. Basic and acidic residues predominate over residues 718–727; that stretch reads VPDRDPEKSS. Residues 732 to 757 traverse the membrane as a helical segment; it reads YLHTVIPAVVVAAILLIAGIIAMICY. A Nuclear localization signal motif is present at residues 758 to 764; it reads RKKRKGK. Threonine 772 carries the phosphothreonine modification. The interval 801 to 877 is required for interaction with CAV3; it reads LQEEKAPLPP…YRSPPPYVPP (77 aa). Residues 805–877 form a disordered region; that stretch reads KAPLPPPEYP…YRSPPPYVPP (73 aa). The segment covering 814–828 has biased composition (polar residues); that stretch reads PNQSVPETTPLNQDT. Positions 841–852 are enriched in pro residues; that stretch reads NAPPYQPPPPFT. Positions 862–877 are required for binding DMD and UTRN; it reads PKNMTPYRSPPPYVPP. The PPXY motif motif lies at 871-874; sequence PPPY. Tyrosine 874 is subject to Phosphotyrosine; by SRC.

In terms of assembly, monomer. Heterodimer of alpha- and beta-dystroglycan subunits which are the central components of the dystrophin-glycoprotein complex. This complex then can form a dystrophin-associated glycoprotein complex (DGC) which is composed of three subcomplexes: a cytoplasmic complex comprised of DMD (or UTRN), DTNA and a number of syntrophins, such as SNTB1, SNTB2, SNTG1 and SNTG2, the transmembrane dystroglycan complex, and the sarcoglycan-sarcospan complex. Interacts (via the N-terminal of alphaDAG1) with LARGE1; the interaction enhances laminin binding. Interacts with SGCD. Interacts with AGR2 and AGR3. Interacts (betaDAG1) with DMD; the interaction is inhibited by phosphorylation on the PPXY motif. Interacts (betaDAG1, via its PPXY motif) with UTRN (via its WWW and ZZ domains); the interaction is inhibited by phosphorylation on the PPXY motif. Interacts (betaDAG1, via its phosphorylated PPXY motif) with the SH2 domain-containing proteins, FYN, CSK, NCK and SHC. Interacts (betaDAG1) with CAV3 (via a central WW-like domain); the interaction disrupts the binding of DMD. BetaDAG1 directly interacts with ANK3, but not with ANK2; this interaction does not interfere with DMD-binding and is required for retention at costameres. Identified in a dystroglycan complex that contains at least PRX, DRP2, UTRN, DMD and DAG1. Interacts with POMGNT1. BetaDAG1 interacts with CD93. In terms of processing, O-glycosylated. POMGNT1 catalyzes the initial addition of N-acetylglucosamine, giving rise to the GlcNAc(beta1-2)Man(alpha1-)O-Ser/Thr moiety and thus providing the necessary basis for the addition of further carbohydrate moieties. Heavily O-glycosylated comprising of up to two thirds of its mass and the carbohydrate composition differs depending on tissue type. Mucin-type O-glycosylation is important for ligand binding activity. O-mannosylation of alpha-DAG1 is found in high abundance in both brain and muscle where the most abundant glycan is Sia-alpha-2-3-Gal-beta-1-4-Glc-NAc-beta-1-2-Man. In muscle, glycosylation on Thr-317, Thr-319 and Thr-379 by a phosphorylated O-mannosyl glycan with the structure 2-(N-acetylamido)-2-deoxygalactosyl-beta-1,3-2-(N-acetylamido)-2-deoxyglucosyl-beta-1,4-6-phosphomannose is mediated by like-acetylglucosaminyltransferase (LARGE1) protein amd is required for laminin binding. O-glycosylated in the N-terminal region with a core 1 or possibly core 8 glycan. The brain form displays a unique glycosylation pattern which is absent in other tissues; this form shows enhanced binding to laminin LAMA5 compared to the skeletal muscle form. Post-translationally, N-glycosylated. Autolytic cleavage produces the alpha and beta subunits. In cutaneous cells, as well as in certain pathological conditions, shedding of beta-dystroglycan can occur releasing a peptide of about 30 kDa. In terms of processing, SRC-mediated phosphorylation of the PPXY motif of the beta subunit recruits SH2 domain-containing proteins, but inhibits binding to WWW domain-containing proteins, DMD and UTRN. This phosphorylation also inhibits nuclear entry.

The protein resides in the secreted. It is found in the extracellular space. The protein localises to the cell membrane. It localises to the cytoplasm. Its subcellular location is the cytoskeleton. The protein resides in the nucleus. It is found in the nucleoplasm. The protein localises to the sarcolemma. It localises to the postsynaptic cell membrane. In terms of biological role, the dystroglycan complex is involved in a number of processes including laminin and basement membrane assembly, sarcolemmal stability, cell survival, peripheral nerve myelination, nodal structure, cell migration, and epithelial polarization. Extracellular peripheral glycoprotein that acts as a receptor for extracellular matrix proteins containing laminin-G domains. Receptor for laminin-2 (LAMA2) and agrin in peripheral nerve Schwann cells. Also acts as a receptor for laminin LAMA5. Its function is as follows. Transmembrane protein that plays important roles in connecting the extracellular matrix to the cytoskeleton. Acts as a cell adhesion receptor in both muscle and non-muscle tissues. Receptor for both DMD and UTRN and, through these interactions, scaffolds axin to the cytoskeleton. Also functions in cell adhesion-mediated signaling and implicated in cell polarity. This chain is Dystroglycan 1, found in Sus scrofa (Pig).